The primary structure comprises 217 residues: NADPH-dependent 3-demethoxyubiquinone 3-hydroxylase, mitochondrial (217 aa).

The N-terminal 35 residues, 1-35, are a transit peptide targeting the mitochondrion; that stretch reads MSCAGAAAAPRLWRLRPGARRSLSAYGRRTSVRFR. The interval 11–29 is required for nuclear localization; sequence RLWRLRPGARRSLSAYGRR. 2 tandem repeats follow at residues 48 to 129 and 130 to 217. A 2 X approximate tandem repeats region spans residues 48–217; it reads AVDRIIRVDH…RVAIYLSERL (170 aa). R51 is a binding site for NADH. Fe cation-binding residues include E60, E90, H93, E142, E178, and H181. Residues Y212 and R216 each coordinate NADH.

This sequence belongs to the COQ7 family. In terms of assembly, component of a multi-subunit COQ enzyme complex. Interacts with COQ8B and COQ6. Interacts with COQ9. It depends on Fe cation as a cofactor. In terms of tissue distribution, expressed dominantly in heart and skeletal muscle.

The protein resides in the mitochondrion inner membrane. Its subcellular location is the mitochondrion. The protein localises to the nucleus. It is found in the chromosome. It carries out the reaction a 5-methoxy-2-methyl-3-(all-trans-polyprenyl)benzoquinone + NADH + O2 = a 3-demethylubiquinone + NAD(+) + H2O. It functions in the pathway cofactor biosynthesis; ubiquinone biosynthesis. In terms of biological role, catalyzes the hydroxylation of the 5-methoxy-2-methyl-3-(all-trans-polyprenyl)benzoquinone at the C6 position and participates in the biosynthesis of ubiquinone. Catalyzes the reaction through a substrate-mediated reduction pathway, whereby NADH shuttles electrons to 5-methoxy-2-methyl-3-(all-trans-decaprenyl)benzoquinone, which then transfers the electrons to the two Fe(3+) centers. The binding of 5-methoxy-2-methyl-3-(all-trans-polyprenyl)benzoquinone (DMQn) mediates reduction of the diiron center by nicotinamide adenine dinucleotide (NADH) and initiates oxygen activation for subsequent DMQ hydroxylation. The physiological substrates are 5-methoxy-2-methyl-3-(all-trans-nonaprenyl)benzoquinone (DMQ(9)) and 5-methoxy-2-methyl-3-(all-trans-decaprenyl)benzoquinone (DMQ(10)), however in vitro the enzyme does not have any specificity concerning the length of the polyprenyl tail, and accepts tails of various lengths with similar efficiency. Also has a structural role in the COQ enzyme complex, stabilizing other COQ polypeptides. Involved in lifespan determination in a ubiquinone-independent manner. Plays a role in modulating mitochondrial stress responses, acting in the nucleus, perhaps via regulating gene expression, independent of its characterized mitochondrial function in ubiquinone biosynthesis. This is NADPH-dependent 3-demethoxyubiquinone 3-hydroxylase, mitochondrial from Homo sapiens (Human).